Reading from the N-terminus, the 226-residue chain is Neuron-specific vesicular protein calcyon (226 aa).

The disordered stretch occupies residues M1 to A23. Topologically, residues M1–R88 are extracellular. Residues M89–Y109 traverse the membrane as a helical segment. Over D110–K226 the chain is Cytoplasmic. Positions T189 to K226 are disordered. Over residues L206–D219 the composition is skewed to basic and acidic residues.

Belongs to the NSG family. In terms of assembly, interacts with CLTA. Expressed exclusively in neurons (at protein level). In all age groups, expressed at significantly higher levels in the medial prefrontal and orbital frontal cortices of spontaneously hypertensive rats (SHR), a model of attention deficit-hyperactivity disorder, than Wistar Kyoto (WKY) animals. In the motor cortex, dorsal striatum and nucleus accumbens, expression is significantly elevated in SHR only in younger animals.

It is found in the cytoplasmic vesicle membrane. The protein localises to the cell membrane. Its function is as follows. Interacts with clathrin light chain A and stimulates clathrin self-assembly and clathrin-mediated endocytosis. This Rattus norvegicus (Rat) protein is Neuron-specific vesicular protein calcyon (Caly).